The chain runs to 381 residues: Opsin Rh2 (381 aa).

Residues 1–56 (MERSHLPETPFDLAHSGPRFQAQSSGNGSVLDNVLPDMAHLVNPYWSRFAPMDPMM) are Extracellular-facing. Asn-27 carries N-linked (GlcNAc...) asparagine glycosylation. A helical transmembrane segment spans residues 57 to 81 (SKILGLFTLAIMIISCCGNGVVVYI). The Cytoplasmic segment spans residues 82-93 (FGGTKSLRTPAN). Residues 94-119 (LLVLNLAFSDFCMMASQSPVMIINFY) traverse the membrane as a helical segment. The Extracellular segment spans residues 120–133 (YETWVLGPLWCDIY). An intrachain disulfide couples Cys-130 to Cys-207. Residues 134-153 (AGCGSLFGCVSIWSMCMIAF) traverse the membrane as a helical segment. The Cytoplasmic segment spans residues 154 to 172 (DRYNVIVKGINGTPMTIKT). Residues 173-196 (SIMKILFIWMMAVFWTVMPLIGWS) traverse the membrane as a helical segment. The Extracellular portion of the chain corresponds to 197–220 (AYVPEGNLTACSIDYMTRMWNPRS). The helical transmembrane segment at 221–248 (YLITYSLFVYYTPLFLICYSYWFIIAAV) threads the bilayer. The Cytoplasmic segment spans residues 249–283 (AAHEKAMREQAKKMNVKSLRSSEDCDKSAEGKLAK). Residues 284–307 (VALTTISLWFMAWTPYLVICYFGL) traverse the membrane as a helical segment. Topologically, residues 308-314 (FKIDGLT) are extracellular. A helical membrane pass occupies residues 315–339 (PLTTIWGATFAKTSAVYNPIVYGIS). Lys-326 carries the N6-(retinylidene)lysine modification. Topologically, residues 340-381 (HPKYRIVLKEKCPMCVFGNTDEPKPDAPASDTETTSEADSKA) are cytoplasmic. The tract at residues 359–381 (TDEPKPDAPASDTETTSEADSKA) is disordered. Residues 370 to 381 (DTETTSEADSKA) are compositionally biased toward polar residues.

Belongs to the G-protein coupled receptor 1 family. Opsin subfamily. In terms of processing, phosphorylated on some or all of the serine and threonine residues present in the C-terminal region. In terms of tissue distribution, predominant opsin expressed in the dorsal ocelli.

It is found in the membrane. Its function is as follows. Visual pigments are the light-absorbing molecules that mediate vision. They consist of an apoprotein, opsin, covalently linked to cis-retinal. This chain is Opsin Rh2 (Rh2), found in Drosophila melanogaster (Fruit fly).